A 151-amino-acid chain; its full sequence is RNA polymerase-binding transcription factor DksA (151 aa).

Residues 33 to 54 (NEAQLAHFRRILEAWRNQLRDE) adopt a coiled-coil conformation. Zn(2+) contacts are provided by Cys-114, Cys-117, Cys-135, and Cys-138. The segment at 114-138 (CESCGVEIGIRRLEARPTADLCIDC) adopts a dksA C4-type zinc-finger fold.

Belongs to the DksA family. As to quaternary structure, interacts directly with the RNA polymerase.

Its subcellular location is the cytoplasm. Its function is as follows. Transcription factor that acts by binding directly to the RNA polymerase (RNAP). Required for negative regulation of rRNA expression and positive regulation of several amino acid biosynthesis promoters. Also required for regulation of fis expression. In Escherichia coli O157:H7, this protein is RNA polymerase-binding transcription factor DksA.